The sequence spans 212 residues: MISGLKGTLKKLEVGYAHIETGGITYEVTISFKTYLELKSLPSHNEVQFQIFHAMNERGQKLFGFLTEQDKEFFKVIKGLQGIGELTALKILSFFSAEELYRIAQSGEAKELEKIPKVKGKTSEKIFFEVKQNLKKLELFLSGTSKEPSISLSSFSETPEEAALSRKREIAILGLVQLGFEEKTASKEVDKILKSSSPTDPGEIIREILKSL.

A domain I region spans residues 1 to 66 (MISGLKGTLK…ERGQKLFGFL (66 aa)). The interval 67–145 (TEQDKEFFKV…KLELFLSGTS (79 aa)) is domain II. A flexible linker region spans residues 146-162 (KEPSISLSSFSETPEEA). The tract at residues 163 to 212 (ALSRKREIAILGLVQLGFEEKTASKEVDKILKSSSPTDPGEIIREILKSL) is domain III.

The protein belongs to the RuvA family. As to quaternary structure, homotetramer. Forms an RuvA(8)-RuvB(12)-Holliday junction (HJ) complex. HJ DNA is sandwiched between 2 RuvA tetramers; dsDNA enters through RuvA and exits via RuvB. An RuvB hexamer assembles on each DNA strand where it exits the tetramer. Each RuvB hexamer is contacted by two RuvA subunits (via domain III) on 2 adjacent RuvB subunits; this complex drives branch migration. In the full resolvosome a probable DNA-RuvA(4)-RuvB(12)-RuvC(2) complex forms which resolves the HJ.

Its subcellular location is the cytoplasm. Its function is as follows. The RuvA-RuvB-RuvC complex processes Holliday junction (HJ) DNA during genetic recombination and DNA repair, while the RuvA-RuvB complex plays an important role in the rescue of blocked DNA replication forks via replication fork reversal (RFR). RuvA specifically binds to HJ cruciform DNA, conferring on it an open structure. The RuvB hexamer acts as an ATP-dependent pump, pulling dsDNA into and through the RuvAB complex. HJ branch migration allows RuvC to scan DNA until it finds its consensus sequence, where it cleaves and resolves the cruciform DNA. This Leptospira borgpetersenii serovar Hardjo-bovis (strain JB197) protein is Holliday junction branch migration complex subunit RuvA.